The chain runs to 233 residues: tRNA (guanine-N(7)-)-methyltransferase (233 aa).

Residues 1–23 form a disordered region; it reads MSPQDRPSRTTEAFFGRRRGKPV. S-adenosyl-L-methionine-binding residues include E64, E89, D116, and D138. The active site involves D138. Substrate-binding positions include K142, D174, and 212-215; that span reads TRYE.

The protein belongs to the class I-like SAM-binding methyltransferase superfamily. TrmB family.

It carries out the reaction guanosine(46) in tRNA + S-adenosyl-L-methionine = N(7)-methylguanosine(46) in tRNA + S-adenosyl-L-homocysteine. It participates in tRNA modification; N(7)-methylguanine-tRNA biosynthesis. In terms of biological role, catalyzes the formation of N(7)-methylguanine at position 46 (m7G46) in tRNA. The sequence is that of tRNA (guanine-N(7)-)-methyltransferase from Mesorhizobium japonicum (strain LMG 29417 / CECT 9101 / MAFF 303099) (Mesorhizobium loti (strain MAFF 303099)).